The sequence spans 292 residues: MKYSLGPVLWYWPKETLEEFYQQAATSSADVIYLGEAVCSKRRATKVGDWLEMAKSLAGSGKQIVLSTLALVQASSELGELKRYVENGEFLIEASDLGVVNMCAERKLPFVAGHALNCYNAVTLKILLKQGMMRWCMPVELSRDWLVNLLNQCDELGIRNQFEVEVLSYGHLPLAYSARCFTARSEDRPKDECETCCIKYPNGRNVLSQENQQVFVLNGIQTMSGYVYNLGNELASMQGLVDVVRLSPQGTDTFAMLDAFRANENGAAPLPLTANSDCNGYWRRLAGLELQA.

Residues C39, C180, C193, and C197 each coordinate [4Fe-4S] cluster.

Belongs to the peptidase U32 family. UbiV subfamily. In terms of assembly, forms a heterodimer with UbiU. The cofactor is [4Fe-4S] cluster.

It functions in the pathway cofactor biosynthesis; ubiquinone biosynthesis. Required for O(2)-independent ubiquinone (coenzyme Q) biosynthesis. Together with UbiU, is essential for the C6-hydroxylation reaction in the oxygen-independent ubiquinone biosynthesis pathway. This is Ubiquinone biosynthesis protein UbiV from Escherichia coli (strain K12).